The following is a 382-amino-acid chain: 8-amino-7-oxononanoate synthase (382 aa).

Arginine 21 and histidine 131 together coordinate substrate. Pyridoxal 5'-phosphate is bound by residues serine 178, histidine 206, and threonine 232. Lysine 235 is modified (N6-(pyridoxal phosphate)lysine). Residue threonine 349 coordinates substrate.

This sequence belongs to the class-II pyridoxal-phosphate-dependent aminotransferase family. BioF subfamily. Homodimer. It depends on pyridoxal 5'-phosphate as a cofactor.

It carries out the reaction 6-carboxyhexanoyl-[ACP] + L-alanine + H(+) = (8S)-8-amino-7-oxononanoate + holo-[ACP] + CO2. The protein operates within cofactor biosynthesis; biotin biosynthesis. In terms of biological role, catalyzes the decarboxylative condensation of pimeloyl-[acyl-carrier protein] and L-alanine to produce 8-amino-7-oxononanoate (AON), [acyl-carrier protein], and carbon dioxide. The chain is 8-amino-7-oxononanoate synthase from Serratia marcescens.